Consider the following 222-residue polypeptide: Peptide methionine sulfoxide reductase MsrA (222 aa).

Cysteine 60 is an active-site residue.

It belongs to the MsrA Met sulfoxide reductase family.

The enzyme catalyses L-methionyl-[protein] + [thioredoxin]-disulfide + H2O = L-methionyl-(S)-S-oxide-[protein] + [thioredoxin]-dithiol. The catalysed reaction is [thioredoxin]-disulfide + L-methionine + H2O = L-methionine (S)-S-oxide + [thioredoxin]-dithiol. Functionally, has an important function as a repair enzyme for proteins that have been inactivated by oxidation. Catalyzes the reversible oxidation-reduction of methionine sulfoxide in proteins to methionine. The sequence is that of Peptide methionine sulfoxide reductase MsrA from Pseudomonas putida (strain GB-1).